A 762-amino-acid polypeptide reads, in one-letter code: uncharacterized protein (762 aa).

Positions 1 to 26 (MENLKSASPEEDSPRHGDNMGKPKRI) are disordered. Positions 12–21 (DSPRHGDNMG) are enriched in basic and acidic residues. The segment at residues 30–57 (CDMCRKRKIRCDGKQPACSNCVSHGIPC) is a DNA-binding region (zn(2)-C6 fungal-type). The disordered stretch occupies residues 647–668 (QSHVPPRISSNHSDTSVKSNSP).

It is found in the nucleus. This is an uncharacterized protein from Schizosaccharomyces pombe (strain 972 / ATCC 24843) (Fission yeast).